A 904-amino-acid chain; its full sequence is MSHQQQQAHFDISSNSTLTTNTIATTTNASVSSSPQLNKAQMAIAEAMALKMHEEEKKKREEKKRKRDNEELLSKQVRTKLENERKKLDDSESINASTNQELYSLFNDLQMISHDHNISFDTPELVVVGMQSDGKSSFIESLLGFQFNIVETNIGTRRPLIIQMINNPSKQQPSCRFKKEDYSNSYGGSSSSTSTTSGNSNHNTDKQQNVSSSQGGGGGSNNLNEDKWEEYETPVNELTEEIIRRTNERTGRAGDRVSSIPIFLRVEFAHCSNLNIYDTPGFRKGGDERLKYEISEMVKKLIEPKNRIIVCLEQSNVEWANTISRPLVKKIDPDFSRTILVNTKFDNRVKELRNRESAHKYLEGEGIIAQKKPFFISLPLKRNLETHRFKDAMKETFLDDYRKLLEIGFDENRFGGQIGIYKVRQYVENLLHEKYQQNLLPSMLQLESICKKTEADIVRVKKELSDNNIVTLKEKVMRFVSNFNGQIERLLEGSVVGDPDEFGQTLLQEKENCSVQPWPGYNFDFDIQNSNYSLYGGAQYERLLNEFEFVIHSKEFPETSINEVASAIGVSKSHNSPIYELAATNIFQTKSKKVLLPLIDIVLQRSSYIMKRLFDISVSILGKDENESSHTVSLYEHFLKELQSQYEKFIQTIESECKSRLKDDFEMFTKIVDWNLLSGLTEIKPYNYLKVSPEETKQRVISIMDCKKLEDEPLSRSRNIDDDTYQKVCMIAGRLFSGIRFFFSKLIRNKLNAFFLDPMFQKLGSFVTDYFSKLNDQKYEEMFQLGLKELENKLHKLEFQLIDCKKNRDKFKDVYNRMKQSLNQNQNQNSSSSSNSASSSNNNVIIKHQQSLNGKFSTPDKNSLTMSPFTSPFTQSNYHQHNNNNYQINQQPLDINNDHYFDQN.

The stretch at 44 to 102 (IAEAMALKMHEEEKKKREEKKRKRDNEELLSKQVRTKLENERKKLDDSESINASTNQEL) forms a coiled coil. The interval 53–93 (HEEEKKKREEKKRKRDNEELLSKQVRTKLENERKKLDDSES) is disordered. Residues 67–90 (RDNEELLSKQVRTKLENERKKLDD) are compositionally biased toward basic and acidic residues. The region spanning 119-441 (SFDTPELVVV…HEKYQQNLLP (323 aa)) is the Dynamin-type G domain. The segment at 129–136 (GMQSDGKS) is G1 motif. Position 129–136 (129–136 (GMQSDGKS)) interacts with GTP. The G2 motif stretch occupies residues 155–157 (GTR). The disordered stretch occupies residues 169–227 (SKQQPSCRFKKEDYSNSYGGSSSSTSTTSGNSNHNTDKQQNVSSSQGGGGGSNNLNEDK). Low complexity predominate over residues 183–213 (SNSYGGSSSSTSTTSGNSNHNTDKQQNVSSS). The interval 278 to 281 (DTPG) is G3 motif. Residues 278–282 (DTPGF) and 343–346 (TKFD) each bind GTP. The tract at residues 343–346 (TKFD) is G4 motif. Residues 378-381 (LPLK) form a G5 motif region. Positions 781-811 (EMFQLGLKELENKLHKLEFQLIDCKKNRDKF) form a coiled coil. 2 disordered regions span residues 821–840 (SLNQ…ASSS) and 853–904 (NGKF…FDQN). The span at 853–876 (NGKFSTPDKNSLTMSPFTSPFTQS) shows a compositional bias: polar residues. Over residues 877–891 (NYHQHNNNNYQINQQ) the composition is skewed to low complexity.

Belongs to the TRAFAC class dynamin-like GTPase superfamily. Dynamin/Fzo/YdjA family.

It localises to the cytoplasm. It catalyses the reaction GTP + H2O = GDP + phosphate + H(+). Functionally, involved in cytokinesis. May hydrolyze GTP. The polypeptide is Dynamin-like protein C (dlpC) (Dictyostelium discoideum (Social amoeba)).